The chain runs to 412 residues: Alanyl-tRNA editing protein Aarsd1 (412 aa).

Residues histidine 109 and histidine 113 each contribute to the Zn(2+) site. Residue serine 174 is modified to Phosphoserine. The Zn(2+) site is built by cysteine 209 and histidine 213.

Belongs to the class-II aminoacyl-tRNA synthetase family. Alax-L subfamily. The cofactor is Zn(2+).

The protein localises to the cytoplasm. In terms of biological role, functions in trans to edit the amino acid moiety from incorrectly charged tRNA(Ala). This Homo sapiens (Human) protein is Alanyl-tRNA editing protein Aarsd1 (AARSD1).